The sequence spans 294 residues: Putative maltodextrin utilization protein YvdJ (294 aa).

The next 4 helical transmembrane spans lie at 35-55 (LSFL…VSFV), 184-204 (MIMM…TFVL), 228-248 (IAIC…MVHF), and 249-269 (DLIT…SFAF).

It localises to the cell membrane. Could have a role in maltodextrin utilization. The sequence is that of Putative maltodextrin utilization protein YvdJ (yvdJ) from Bacillus subtilis (strain 168).